The chain runs to 356 residues: Probable protein phosphatase 2C T23F11.1 (356 aa).

Residues 23–286 form the PPM-type phosphatase domain; sequence LVGSSCMQGW…DNMTVVLVGL (264 aa). 4 residues coordinate Mn(2+): aspartate 59, glycine 60, aspartate 228, and aspartate 277. The tract at residues 336-356 is disordered; it reads NAANQEEEEDDNEPAPANFQV.

Belongs to the PP2C family. It depends on Mg(2+) as a cofactor. The cofactor is Mn(2+).

The catalysed reaction is O-phospho-L-seryl-[protein] + H2O = L-seryl-[protein] + phosphate. The enzyme catalyses O-phospho-L-threonyl-[protein] + H2O = L-threonyl-[protein] + phosphate. In Caenorhabditis elegans, this protein is Probable protein phosphatase 2C T23F11.1 (ppm-2).